A 29-amino-acid polypeptide reads, in one-letter code: Cytochrome b6-f complex subunit 8 (29 aa).

Residues isoleucine 3 to valine 23 form a helical membrane-spanning segment.

Belongs to the PetN family. In terms of assembly, the 4 large subunits of the cytochrome b6-f complex are cytochrome b6, subunit IV (17 kDa polypeptide, PetD), cytochrome f and the Rieske protein, while the 4 small subunits are PetG, PetL, PetM and PetN. The complex functions as a dimer.

It is found in the plastid. The protein resides in the chloroplast thylakoid membrane. Its function is as follows. Component of the cytochrome b6-f complex, which mediates electron transfer between photosystem II (PSII) and photosystem I (PSI), cyclic electron flow around PSI, and state transitions. The sequence is that of Cytochrome b6-f complex subunit 8 from Chlorokybus atmophyticus (Soil alga).